The primary structure comprises 645 residues: Glucans biosynthesis glucosyltransferase H (645 aa).

Positions 1 to 28 (MDGTVTLSPAPTDLPPVSSLDAGQPTLP) are disordered. A run of 7 helical transmembrane segments spans residues 64-84 (LIGGTLTATAVAVWVMLSVLW), 98-118 (LFVLLFAWIAMSFASAVAGFI), 423-443 (APMWGMLMLVGIGIPLAGAGI), 465-485 (AIWIFVCTMFVLLAPKLLGYI), 504-524 (ALSILLETVLAALMAPVVMYL), 558-578 (SYGGLSVFGLFMGTLAYLVSP), and 580-600 (LAAWMAPVIVGMVVSIPVVAV).

This sequence belongs to the glycosyltransferase 2 family. OpgH subfamily.

It is found in the cell inner membrane. It participates in glycan metabolism; osmoregulated periplasmic glucan (OPG) biosynthesis. In terms of biological role, involved in the biosynthesis of osmoregulated periplasmic glucans (OPGs). The protein is Glucans biosynthesis glucosyltransferase H of Xanthomonas campestris pv. campestris (strain B100).